A 602-amino-acid chain; its full sequence is Ligand-dependent nuclear receptor corepressor-like protein (602 aa).

The segment at 104–124 (PSLDSSQSTPTEELSSQGQSN) is disordered. Residues 106-124 (LDSSQSTPTEELSSQGQSN) are compositionally biased toward polar residues. Residues K242, K319, K340, and K397 each participate in a glycyl lysine isopeptide (Lys-Gly) (interchain with G-Cter in SUMO2) cross-link. Disordered stretches follow at residues 495–521 (TVDGTSENTEDGLDRKDSKQPRKKRGR) and 564–602 (ERSGTLKTPPKKKLRLPDTGLYNMTDSGTGSCKNSSKPV). Positions 516-568 (RKKRGRYRQYDHEIMEEAIAMVMSGKMSVSKAQGIYGVPHSTLEYKVKERSGT) constitute an HTH psq-type domain. The H-T-H motif DNA-binding region spans 544–564 (VSKAQGIYGVPHSTLEYKVKE). The span at 585-602 (YNMTDSGTGSCKNSSKPV) shows a compositional bias: polar residues.

It localises to the nucleus. Functionally, may act as transcription activator that binds DNA elements with the sequence 5'-CCCTATCGATCGATCTCTACCT-3'. May play a role in spermatogenesis. This is Ligand-dependent nuclear receptor corepressor-like protein (LCORL) from Homo sapiens (Human).